Consider the following 206-residue polypeptide: Small ribosomal subunit protein uS4 (206 aa).

Residues 96 to 159 form the S4 RNA-binding domain; that stretch reads TRLDNVVYRM…KKQARISASL (64 aa).

The protein belongs to the universal ribosomal protein uS4 family. As to quaternary structure, part of the 30S ribosomal subunit. Contacts protein S5. The interaction surface between S4 and S5 is involved in control of translational fidelity.

Its function is as follows. One of the primary rRNA binding proteins, it binds directly to 16S rRNA where it nucleates assembly of the body of the 30S subunit. With S5 and S12 plays an important role in translational accuracy. This Shewanella violacea protein is Small ribosomal subunit protein uS4.